Reading from the N-terminus, the 432-residue chain is MELENDKTSSKQLQIRLVALNKRFDTSGNLLSLPSRFGCDELSETVHTLLSANDIEIPASVQFDFAINNDLLRDSLEGYVTSKNLSTESVIEVVYFQKEPPPDFLNTILHSDWIKSVRSKDDCILAGSLDGTARIWNMAGEEYAIFKGHESYVNGVEWISKDNNHATIVTASQDGTLRLWEWAIGTKSVECLCECKGHTQAVNAVTVNQSKTKICSVSSDKMIKIWSTDCSRKDDDTTHPIHKKMKTNQGLQKAVDKLPDITLSGHTDGIDAVVWPKEAEIITAGWDHRIKIWDTEVGVNKSDINVNKVVKGITCSPFQDLIAAGSFDEGIIRLYDPRVVGDQTVLKLTLKSHKNIVSSLCWSTTDEQQLVSGSFDNTVKLWDIRCNLAPLYSIEGHEDKVLAVDWSEPQYIVSGGADNRIQIYQREVAQRS.

The segment at 13 to 97 is ubiquitin-like (UBL) domain; it reads LQIRLVALNK…ESVIEVVYFQ (85 aa). WD repeat units follow at residues 109–146, 148–190, 197–236, 265–303, 305–345, 352–392, and 396–432; these read LHSDWIKSVRSKDDCILAGSLDGTARIWNMAGEEYAIF, GHES…KSVE, GHTQAVNAVTVNQSKTKICSVSSDKMIKIWSTDCSRKDDD, GHTDGIDAVVWPKEAEIITAGWDHRIKIWDTEVGVNKSD, NVNK…DQTV, SHKN…APLY, and GHEDKVLAVDWSEPQYIVSGGADNRIQIYQREVAQRS.

The protein belongs to the WD repeat WDR12/YTM1 family.

It is found in the nucleus. It localises to the nucleolus. The protein resides in the nucleoplasm. Its function is as follows. Required for maturation of ribosomal RNAs and formation of the large ribosomal subunit. The polypeptide is Ribosome biogenesis protein WDR12 homolog (Trichoplax adhaerens (Trichoplax reptans)).